Reading from the N-terminus, the 312-residue chain is uncharacterized protein (312 aa).

The protein resides in the mitochondrion. This is an uncharacterized protein from Schizosaccharomyces pombe (strain 972 / ATCC 24843) (Fission yeast).